The chain runs to 555 residues: Formate--tetrahydrofolate ligase (555 aa).

It belongs to the formate--tetrahydrofolate ligase family.

It carries out the reaction (6S)-5,6,7,8-tetrahydrofolate + formate + ATP = (6R)-10-formyltetrahydrofolate + ADP + phosphate. It functions in the pathway one-carbon metabolism; tetrahydrofolate interconversion. This is Formate--tetrahydrofolate ligase from Porphyromonas gingivalis (strain ATCC BAA-308 / W83).